Consider the following 230-residue polypeptide: TorCAD operon transcriptional regulatory protein TorR (230 aa).

The Response regulatory domain maps to 4 to 117 (HIVIVEDEPV…ELVVRVKNLL (114 aa)). Asp53 bears the 4-aspartylphosphate mark. Residues 132 to 227 (DNCYRFAGYC…QHGEGYFLAA (96 aa)) constitute a DNA-binding region (ompR/PhoB-type).

In terms of assembly, interacts with TorI. TorI binds to the effector domain of TorR. This interaction, which does not interfere with TorR DNA binding activity, probably prevents the recruitment of RNA polymerase to the torCAD promoter. Phosphorylated and dephosphorylated by TorS.

It localises to the cytoplasm. In terms of biological role, member of the two-component regulatory system TorS/TorR involved in the anaerobic utilization of trimethylamine-N-oxide (TMAO). Phosphorylated TorR activates the transcription of the torCAD operon by binding to four decameric boxes located in the torCAD promoter. Box1, 2 and 4 contain the DNA sequence 5'-CTGTTCATAT-3' and box3 contains the DNA sequence 5'-CCGTTCATCC-3'. Phosphorylated as well as unphosphorylated TorR negatively regulates its own expression by binding to box1 and 2. The chain is TorCAD operon transcriptional regulatory protein TorR (torR) from Escherichia coli (strain K12).